A 469-amino-acid polypeptide reads, in one-letter code: 3-isopropylmalate dehydratase large subunit (469 aa).

[4Fe-4S] cluster is bound by residues Cys-348, Cys-409, and Cys-412.

This sequence belongs to the aconitase/IPM isomerase family. LeuC type 1 subfamily. As to quaternary structure, heterodimer of LeuC and LeuD. The cofactor is [4Fe-4S] cluster.

The catalysed reaction is (2R,3S)-3-isopropylmalate = (2S)-2-isopropylmalate. It functions in the pathway amino-acid biosynthesis; L-leucine biosynthesis; L-leucine from 3-methyl-2-oxobutanoate: step 2/4. In terms of biological role, catalyzes the isomerization between 2-isopropylmalate and 3-isopropylmalate, via the formation of 2-isopropylmaleate. The protein is 3-isopropylmalate dehydratase large subunit of Nitrosococcus oceani (strain ATCC 19707 / BCRC 17464 / JCM 30415 / NCIMB 11848 / C-107).